Here is a 50-residue protein sequence, read N- to C-terminus: Defensin D2 (50 aa).

4 disulfides stabilise this stretch: C3-C50, C14-C35, C20-C44, and C24-C46.

Contains 4 disulfide bonds.

It is found in the secreted. Antimicrobial peptide active against fungi, Gram-positive and Gram-negative bacteria. Inhibits growth of hyphae in the fungi A.niger (IC(50)=3.5 ug/ml), B.sorokiniana (IC(50)=1.8 ug/ml), F.oxysporum (IC(50)=5.3 ug/ml), F.graminearum (IC(50)=6.9 ug/ml), F.culmorum (IC(50)=6.9 ug/ml) and B.cinerea (IC(50)=13.7 ug/ml). Has no effect on spore germination. Destroys spores in germinated conidia by disruption of cell walls and membranes in A.niger and B.sorokiniana. Causes vacuolization of germinated macro- and microconidia in F.oxysporum, F.graminearum and F.culmorum. Strongly inhibits growth of P.infestans on potato tubers above concentrations of 3.4 ug/ml. Inhibits growth of Gram-positive bacteria C.michiganensis and B.subtilis and of Gram-negative bacteria P.syringae, E.carotovora and E.coli. This is Defensin D2 from Nigella sativa (Black cumin).